Here is a 416-residue protein sequence, read N- to C-terminus: Adenylosuccinate synthetase (416 aa).

GTP contacts are provided by residues 13–19 and 41–43; these read GDEGKGK and GHT. The Proton acceptor role is filled by aspartate 14. The Mg(2+) site is built by aspartate 14 and glycine 41. IMP-binding positions include 14 to 17, 39 to 42, threonine 126, arginine 140, glutamine 220, threonine 235, and arginine 299; these read DEGK and NAGH. Histidine 42 acts as the Proton donor in catalysis. 295–301 lines the substrate pocket; that stretch reads VSTGRKR. Residues arginine 301, 327–329, and 405–407 each bind GTP; these read KLD and STS.

This sequence belongs to the adenylosuccinate synthetase family. Homodimer. It depends on Mg(2+) as a cofactor.

The protein localises to the cytoplasm. The catalysed reaction is IMP + L-aspartate + GTP = N(6)-(1,2-dicarboxyethyl)-AMP + GDP + phosphate + 2 H(+). It participates in purine metabolism; AMP biosynthesis via de novo pathway; AMP from IMP: step 1/2. Its function is as follows. Plays an important role in the de novo pathway of purine nucleotide biosynthesis. Catalyzes the first committed step in the biosynthesis of AMP from IMP. The polypeptide is Adenylosuccinate synthetase (Campylobacter jejuni subsp. jejuni serotype O:6 (strain 81116 / NCTC 11828)).